The chain runs to 306 residues: Putative NylC-analogous protein (306 aa).

The protein belongs to the peptidase S58 family.

This is Putative NylC-analogous protein from Agromyces sp. (strain KY5R).